We begin with the raw amino-acid sequence, 76 residues long: Sec-independent protein translocase protein TatA (76 aa).

A helical membrane pass occupies residues 1-21 (MGGLSIWHWLIVLLIVALVFG). Residues 40-76 (KDGMKEGETPADAQQLPRTGTVDVNAKETTRSDSNKA) are disordered. A compositionally biased stretch (basic and acidic residues) spans 64–76 (NAKETTRSDSNKA).

It belongs to the TatA/E family. In terms of assembly, the Tat system comprises two distinct complexes: a TatABC complex, containing multiple copies of TatA, TatB and TatC subunits, and a separate TatA complex, containing only TatA subunits. Substrates initially bind to the TatABC complex, which probably triggers association of the separate TatA complex to form the active translocon.

The protein localises to the cell inner membrane. Part of the twin-arginine translocation (Tat) system that transports large folded proteins containing a characteristic twin-arginine motif in their signal peptide across membranes. TatA could form the protein-conducting channel of the Tat system. In Burkholderia ambifaria (strain MC40-6), this protein is Sec-independent protein translocase protein TatA.